We begin with the raw amino-acid sequence, 620 residues long: Schwann cell myelin protein (620 aa).

Residues 1-17 form the signal peptide; it reads MELLVLTVLLMGTGCIS. The Extracellular portion of the chain corresponds to 18 to 516; sequence APWAAWMPPK…GGLVWAKVGP (499 aa). The 79-residue stretch at 28 to 106 folds into the Ig-like V-type domain; it reads MAALSGTCVQ…RDCTLNIARL (79 aa). Disulfide bonds link cysteine 35–cysteine 164, cysteine 40–cysteine 99, and cysteine 158–cysteine 216. Arginine 117 is an N-acetylneuraminate binding site. Ig-like C2-type domains lie at 151 to 233, 239 to 322, 325 to 407, and 414 to 495; these read GSEA…DVGL, PQVV…LRVA, PRAP…FNIS, and VLPA…NRHG. A glycan (N-linked (GlcNAc...) asparagine) is linked at asparagine 222. A disulfide bond links cysteine 260 and cysteine 304. Residues asparagine 314 and asparagine 331 are each glycosylated (N-linked (GlcNAc...) asparagine). Cysteine 346 and cysteine 391 are oxidised to a cystine. A glycan (N-linked (GlcNAc...) asparagine) is linked at asparagine 405. 2 disulfide bridges follow: cysteine 420–cysteine 429 and cysteine 431–cysteine 488. Asparagine 449 carries N-linked (GlcNAc...) asparagine glycosylation. A helical transmembrane segment spans residues 517 to 536; that stretch reads VGAVVAFAIVIAVVCYLSQS. At 537-620 the chain is on the cytoplasmic side; that stretch reads RRKKGAGSPE…PPEYAEIRVK (84 aa). 2 disordered regions span residues 539-562 and 583-620; these read KKGA…DPDL and VKEG…IRVK.

Belongs to the immunoglobulin superfamily. SIGLEC (sialic acid binding Ig-like lectin) family. As to expression, exclusively expressed by myelinating and nonmyelinating Schwann cells and oligodendrocytes.

It is found in the membrane. The polypeptide is Schwann cell myelin protein (SMP) (Coturnix japonica (Japanese quail)).